The sequence spans 387 residues: Eukaryotic translation initiation factor 3 subunit M (387 aa).

Residues 181 to 340 (LSSKVMIELL…RKVHISSTMH (160 aa)) form the PCI domain.

This sequence belongs to the eIF-3 subunit M family. As to quaternary structure, component of the eukaryotic translation initiation factor 3 (eIF-3) complex. The eIF-3 complex interacts with pix.

The protein localises to the cytoplasm. It localises to the golgi apparatus. Component of the eukaryotic translation initiation factor 3 (eIF-3) complex, which is involved in protein synthesis of a specialized repertoire of mRNAs and, together with other initiation factors, stimulates binding of mRNA and methionyl-tRNAi to the 40S ribosome. The eIF-3 complex specifically targets and initiates translation of a subset of mRNAs involved in cell proliferation. In Drosophila grimshawi (Hawaiian fruit fly), this protein is Eukaryotic translation initiation factor 3 subunit M.